A 548-amino-acid polypeptide reads, in one-letter code: Chaperonin GroEL (548 aa).

ATP-binding positions include 30-33 (TLGP), Lys51, 87-91 (DGTTT), Gly415, 479-481 (NAA), and Asp495.

The protein belongs to the chaperonin (HSP60) family. Forms a cylinder of 14 subunits composed of two heptameric rings stacked back-to-back. Interacts with the co-chaperonin GroES.

It localises to the cytoplasm. The catalysed reaction is ATP + H2O + a folded polypeptide = ADP + phosphate + an unfolded polypeptide.. Functionally, together with its co-chaperonin GroES, plays an essential role in assisting protein folding. The GroEL-GroES system forms a nano-cage that allows encapsulation of the non-native substrate proteins and provides a physical environment optimized to promote and accelerate protein folding. The chain is Chaperonin GroEL from Lawsonia intracellularis (strain PHE/MN1-00).